The sequence spans 427 residues: Serine--tRNA ligase (427 aa).

Residue 231–233 (TAE) participates in L-serine binding. 262–264 (RSE) is a binding site for ATP. Glu-285 contacts L-serine. 349–352 (EISS) contributes to the ATP binding site. L-serine is bound at residue Ser-385.

This sequence belongs to the class-II aminoacyl-tRNA synthetase family. Type-1 seryl-tRNA synthetase subfamily. In terms of assembly, homodimer. The tRNA molecule binds across the dimer.

The protein localises to the cytoplasm. The catalysed reaction is tRNA(Ser) + L-serine + ATP = L-seryl-tRNA(Ser) + AMP + diphosphate + H(+). It catalyses the reaction tRNA(Sec) + L-serine + ATP = L-seryl-tRNA(Sec) + AMP + diphosphate + H(+). It participates in aminoacyl-tRNA biosynthesis; selenocysteinyl-tRNA(Sec) biosynthesis; L-seryl-tRNA(Sec) from L-serine and tRNA(Sec): step 1/1. In terms of biological role, catalyzes the attachment of serine to tRNA(Ser). Is also able to aminoacylate tRNA(Sec) with serine, to form the misacylated tRNA L-seryl-tRNA(Sec), which will be further converted into selenocysteinyl-tRNA(Sec). The polypeptide is Serine--tRNA ligase (Sinorhizobium medicae (strain WSM419) (Ensifer medicae)).